The following is a 256-amino-acid chain: Dihydromonacolin L-[lovastatin nonaketide synthase] thioesterase (256 aa).

Active-site charge relay system residues include serine 122, aspartate 201, and histidine 229.

This sequence belongs to the LovG family.

The catalysed reaction is dihydromonacolin L-[lovastatin nonaketide synthase] + H2O = holo-[lovastatin nonaketide synthase] + dihydromonacolin L carboxylate + H(+). It functions in the pathway polyketide biosynthesis; lovastatin biosynthesis. Functionally, esterase; part of the gene cluster that mediates the biosynthesis of lovastatin (also known as mevinolin, mevacor or monacolin K), a hypolipidemic inhibitor of (3S)-hydroxymethylglutaryl-coenzyme A (HMG-CoA) reductase (HMGR). The first step in the biosynthesis of lovastatin is the production of dihydromonacolin L acid by the lovastatin nonaketide synthase lovB and the trans-acting enoyl reductase lovC via condensation of one acetyl-CoA unit and 8 malonyl-CoA units. Dihydromonacolin L acid is released from lovB by the thioesterase lovG. Next, dihydromonacolin L acid is oxidized by the dihydromonacolin L monooxygenase lovA twice to form monacolin J acid. The 2-methylbutyrate moiety of lovastatin is synthesized by the lovastatin diketide synthase lovF via condensation of one acetyl-CoA unit and one malonyl-CoA unit. Finally, the covalent attachment of this moiety to monacolin J acid is catalyzed by the transesterase lovD to yield lovastatin. LovD has broad substrate specificity and can also convert monacolin J to simvastatin using alpha-dimethylbutanoyl-S-methyl-3-mercaptopropionate (DMB-S-MMP) as the thioester acyl donor, and can also catalyze the reverse reaction and function as hydrolase in vitro. LovD has much higher activity with LovF-bound 2-methylbutanoate than with free diketide substrates. Its function is as follows. Esterase that catalyzes the release of covalently bound dihydromonacolin L from LovB during lovastatin biosynthesis. The polypeptide is Dihydromonacolin L-[lovastatin nonaketide synthase] thioesterase (Aspergillus terreus (strain NIH 2624 / FGSC A1156)).